The primary structure comprises 304 residues: Rhomboid-like protein 19 (304 aa).

6 helical membrane passes run 23–43, 58–78, 93–113, 120–140, 158–175, and 179–198; these read LVVGHLVVQFIPATVPYLALI, GYFELSVYGVVFSTVSLLFMG, FIFVVNFLTYLCVFVTAIALY, VYLYMPFAGFHGVLAGLLVGI, WLPSIMLILSIASSFFTL, and AYLPTLIFGTYMGWLYLRYL. Residues 247 to 304 form a disordered region; it reads SEDHDYSTSGAPLPGSDSAEASRRRERGARALEERLGTERLVPARNKDELQSDGLDNV. The span at 266–284 shows a compositional bias: basic and acidic residues; that stretch reads EASRRRERGARALEERLGT.

Belongs to the peptidase S54 family.

The protein resides in the membrane. In terms of biological role, probable rhomboid-type serine protease that catalyzes intramembrane proteolysis. This is Rhomboid-like protein 19 from Arabidopsis thaliana (Mouse-ear cress).